The primary structure comprises 525 residues: Probable malate:quinone oxidoreductase (525 aa).

It belongs to the MQO family. It depends on FAD as a cofactor.

It carries out the reaction (S)-malate + a quinone = a quinol + oxaloacetate. It functions in the pathway carbohydrate metabolism; tricarboxylic acid cycle; oxaloacetate from (S)-malate (quinone route): step 1/1. The chain is Probable malate:quinone oxidoreductase from Serratia proteamaculans (strain 568).